The sequence spans 30 residues: Brevinin-2Rg (30 aa).

Cysteines 24 and 30 form a disulfide.

In terms of tissue distribution, expressed by the skin glands.

The protein localises to the secreted. Antimicrobial peptide. This Pelophylax ridibundus (Marsh frog) protein is Brevinin-2Rg.